We begin with the raw amino-acid sequence, 521 residues long: Histone acetyltransferase ESA1 (521 aa).

Residues 1-32 (MSVGEDKSGTATPQHNTSIRITDDEERSDEKK) are disordered. Residues 9–20 (GTATPQHNTSIR) are compositionally biased toward polar residues. The Tudor-knot domain maps to 39 to 90 (ITGCKLYVSKDGEYRLAEILQDHMKKGKKVFYVHYQEFNKRLDEWISADRID). The tract at residues 100 to 154 (VKVDKKDDKKEGKSKTSKKSKSKNGKTGSKSVTSTPQPNEDTAPGTPRNDDEMDL) is disordered. The span at 101–113 (KVDKKDDKKEGKS) shows a compositional bias: basic and acidic residues. Positions 114–123 (KTSKKSKSKN) are enriched in basic residues. The span at 124-133 (GKTGSKSVTS) shows a compositional bias: low complexity. The 318-residue stretch at 192 to 509 (ARVRNLSSVI…LDPSKLSWTP (318 aa)) folds into the MYST-type HAT domain. The segment at 225–250 (IYICDFTLAYFGSLKQFERFRTKCSM) adopts a C2HC MYST-type; degenerate zinc-finger fold. An ESA1-RPD3 motif motif is present at residues 275–296 (RTWCRNLCLLSKLFLDHKTLYY). At Lys292 the chain carries N6-acetyllysine; by autocatalysis. Residues 333–337 (ACILT) and 342–348 (QKMGFGK) contribute to the acetyl-CoA site. Glu368 acts as the Proton donor/acceptor in catalysis. Position 372 (Ser372) interacts with acetyl-CoA. Polar residues-rich tracts occupy residues 403–418 (NNPQ…DSSV) and 426–436 (QSANIQNGNTP). The segment at 403-438 (NNPQLLTEASSKDSSVSPPPGGRQSANIQNGNTPSS) is disordered.

The protein belongs to the MYST (SAS/MOZ) family. As to quaternary structure, component of the NuA4 histone acetyltransferase complex. Autoacetylation at Lys-292 is required for proper function.

It localises to the nucleus. It is found in the chromosome. It carries out the reaction L-lysyl-[histone] + acetyl-CoA = N(6)-acetyl-L-lysyl-[histone] + CoA + H(+). The enzyme catalyses L-lysyl-[protein] + acetyl-CoA = N(6)-acetyl-L-lysyl-[protein] + CoA + H(+). It catalyses the reaction 2-hydroxyisobutanoyl-CoA + L-lysyl-[protein] = N(6)-(2-hydroxyisobutanoyl)-L-lysyl-[protein] + CoA + H(+). The catalysed reaction is (2E)-butenoyl-CoA + L-lysyl-[protein] = N(6)-(2E)-butenoyl-L-lysyl-[protein] + CoA + H(+). In terms of biological role, catalytic component of the NuA4 histone acetyltransferase (HAT) complex which is involved in epigenetic transcriptional activation of selected genes principally by acetylation of nucleosomal histones H4, H3, H2B, H2A and H2A variant H2A.Z. Acetylates histone H4 to form H4K5ac, H4K8ac, H4K12ac and H4K16ac, histone H3 to form H3K14ac, and histone H2A to form H2AK4ac and H2AK7ac. The NuA4 complex is involved in the DNA damage response and is required for chromosome segregation. The NuA4 complex plays a direct role in repair of DNA double-strand breaks (DSBs) through homologous recombination. Recruitment to promoters depends on H3K4me. Also acetylates non-histone proteins. In addition to protein acetyltransferase, can use different acyl-CoA substrates, such as 2-hydroxyisobutanoyl-CoA (2-hydroxyisobutyryl-CoA) or (2E)-butenoyl-CoA (crotonyl-CoA), and is able to mediate protein 2-hydroxyisobutyrylation and crotonylation, respectively. This Debaryomyces hansenii (strain ATCC 36239 / CBS 767 / BCRC 21394 / JCM 1990 / NBRC 0083 / IGC 2968) (Yeast) protein is Histone acetyltransferase ESA1 (ESA1).